The chain runs to 94 residues: Small ribosomal subunit protein bS18 (94 aa).

The protein belongs to the bacterial ribosomal protein bS18 family. As to quaternary structure, part of the 30S ribosomal subunit. Forms a tight heterodimer with protein bS6.

Functionally, binds as a heterodimer with protein bS6 to the central domain of the 16S rRNA, where it helps stabilize the platform of the 30S subunit. This is Small ribosomal subunit protein bS18 from Leptospira biflexa serovar Patoc (strain Patoc 1 / Ames).